We begin with the raw amino-acid sequence, 282 residues long: DegV domain-containing protein SpyM3_0586 (282 aa).

In terms of domain architecture, DegV spans 3–280 (LAVITDSTAT…EGAIAFGVTP (278 aa)). Hexadecanoate contacts are provided by T61 and S94.

In terms of biological role, may bind long-chain fatty acids, such as palmitate, and may play a role in lipid transport or fatty acid metabolism. The chain is DegV domain-containing protein SpyM3_0586 from Streptococcus pyogenes serotype M3 (strain ATCC BAA-595 / MGAS315).